Reading from the N-terminus, the 3619-residue chain is BEACH domain-containing protein lvsA (3619 aa).

7 disordered regions span residues 1-117, 648-709, 1101-1129, 1367-1390, 1636-1658, 1893-1924, and 1964-1999; these read MFRR…NNNN, KIDD…EKEA, NNNNNNSSNNSNNSNNSNNNNNNNNNNDQ, SPNLTGLQNNNNNNNNSGGSNSKK, IPTPSSSSSSSSTSSTSSRRKSI, SSISSNISSSSSSSTLVNSSNSNNNNNTPTSG, and QQAALKKKNRMSIQSSPFQSKNLGTGGDDSVTNTPN. Residues 17–30 are compositionally biased toward pro residues; sequence PQVPHSPGHPPHQP. Low complexity-rich tracts occupy residues 31 to 59, 68 to 87, 97 to 117, 656 to 689, 1101 to 1127, 1375 to 1387, 1640 to 1652, and 1893 to 1923; these read PQQQQQQQQQQQQQQQQQQQQQQQQQQPQ, SVSSPIGSTTSSNSTSSFSS, EESSSINSNNNNNNNKNNNNN, NNNNNNNNNNNNNNNNNNNDNDNNNNNDNNNEEN, NNNNNNSSNNSNNSNNSNNNNNNNNNN, NNNNNNNNSGGSN, SSSSSSSSTSSTS, and SSISSNISSSSSSSTLVNSSNSNNNNNTPTS. The stretch at 94-133 is one WD 1 repeat; sequence SATEESSSINSNNNNNNNKNNNNNNNSNIIESNINVWTIM. A compositionally biased stretch (polar residues) spans 1974-1986; sequence MSIQSSPFQSKNL. Positions 2234–2258 form a coiled coil; it reads VKILEKLEADRVGLQKTVQSLYKSL. One copy of the WD 2 repeat lies at 2294 to 2335; sequence LDSDFMNAFCYPLYKLVISDQHEHVDNSIKLWRLLLSLKTSS. Disordered stretches follow at residues 2403–2457 and 2596–2785; these read KKQH…ITKK and NTSS…SEDE. Over residues 2440-2452 the composition is skewed to basic and acidic residues; it reads DRKDQSHQEEKSK. The segment covering 2596–2662 has biased composition (low complexity); the sequence is NTSSITNNNN…TTTPQQSSSQ (67 aa). Composition is skewed to polar residues over residues 2663–2687 and 2694–2725; these read IKVSSPELSSNEITPPTSPVQSSSE and KLQSSTVEGQLSRNPSSSELFNDNSSTISEEN. Composition is skewed to low complexity over residues 2726–2735 and 2742–2764; these read SSLTSASTTL and TQTTTTTTTSTPTTQSSVATTTT. Positions 2807 to 2932 constitute a BEACH-type PH domain; the sequence is KDPRLNGIMY…TRDEVYHTLV (126 aa). The tract at residues 2940–2971 is disordered; that stretch reads TIGGDAQGITGGQTGNDDNDDHHGGGGGRGVR. Gly residues predominate over residues 2944-2953; it reads DAQGITGGQT. The segment covering 2959–2971 has biased composition (basic and acidic residues); that stretch reads DDHHGGGGGRGVR. The BEACH domain maps to 2972–3270; it reads DRFTSIWRKS…QLFDKPHPKR (299 aa). 5 WD repeats span residues 3347–3386, 3389–3428, 3431–3471, 3474–3518, and 3563–3602; these read HHDGPLTCLTATEDGRICVSGGSDSLICVYNLKRFSLAKR, GHTGSITCVSASRPYSIIVSGSDDRTCIIWDLNRLCYVRS, AHEG…NYKT, IAND…LPDN, and SHSTAITSIFLTNDQQKFYTGDITGRVCMWSDNEASQVKQ. The disordered stretch occupies residues 3516–3539; that stretch reads PDNNNSNNNNNNNNNNNNNATQIP. Residues 3518 to 3534 show a composition bias toward low complexity; that stretch reads NNNSNNNNNNNNNNNNN.

Its subcellular location is the contractile vacuole membrane. In terms of biological role, involved in myosin-independent cytokinesis and early steps of phagocytosis. Also involved in contractile vacuole-mediated osmoregulation. This chain is BEACH domain-containing protein lvsA (lvsA), found in Dictyostelium discoideum (Social amoeba).